A 552-amino-acid chain; its full sequence is CCR4-NOT transcription complex subunit 6 (552 aa).

LRR repeat units follow at residues 52–73 (HLTALHLSDNSLSCIPSDIAKL), 75–96 (NLVYLDLSHNQIQSLPAELGNM), 98–120 (SLRELHLNYNQLRVLPFELGKLF), and 121–143 (QLQTLSLKGNPLTQDILNLCLEP). Residues 153–552 (LLDNLSVSTE…VNGIHLPGRR (400 aa)) are nuclease domain. Glu235 is a Mg(2+) binding site. Substrate contacts are provided by Glu235, Glu271, His356, and Pro361. Residue Asp407 participates in Mg(2+) binding. Residue Asp407 is the Proton donor/acceptor of the active site. The substrate site is built by Asn409, Asn476, and Phe481.

Belongs to the CCR4/nocturin family. Subunit of the CCR4-NOT core complex. The cofactor is Mg(2+).

It is found in the cytoplasm. Its subcellular location is the nucleus. It carries out the reaction Exonucleolytic cleavage of poly(A) to 5'-AMP.. Functionally, poly(A) nuclease involved in mRNA decay. Has 3'-5' RNase activity. The CCR4-NOT complex functions as a general transcription regulation complex. Enhances ligand-dependent transcriptional activity of nuclear hormone receptors. This is CCR4-NOT transcription complex subunit 6 (cnot6) from Xenopus laevis (African clawed frog).